Consider the following 70-residue polypeptide: UPF0434 protein MCA0634 (70 aa).

It belongs to the UPF0434 family.

The chain is UPF0434 protein MCA0634 from Methylococcus capsulatus (strain ATCC 33009 / NCIMB 11132 / Bath).